A 237-amino-acid chain; its full sequence is Putative N-acetylmannosamine-6-phosphate 2-epimerase (237 aa).

It belongs to the NanE family.

The enzyme catalyses an N-acyl-D-glucosamine 6-phosphate = an N-acyl-D-mannosamine 6-phosphate. It functions in the pathway amino-sugar metabolism; N-acetylneuraminate degradation; D-fructose 6-phosphate from N-acetylneuraminate: step 3/5. In terms of biological role, converts N-acetylmannosamine-6-phosphate (ManNAc-6-P) to N-acetylglucosamine-6-phosphate (GlcNAc-6-P). The sequence is that of Putative N-acetylmannosamine-6-phosphate 2-epimerase from Listeria monocytogenes serovar 1/2a (strain ATCC BAA-679 / EGD-e).